A 272-amino-acid polypeptide reads, in one-letter code: 3-methyl-2-oxobutanoate hydroxymethyltransferase (272 aa).

2 residues coordinate Mg(2+): aspartate 52 and aspartate 91. 3-methyl-2-oxobutanoate contacts are provided by residues 52-53 (DS), aspartate 91, and lysine 121. Glutamate 123 is a Mg(2+) binding site. The active-site Proton acceptor is the glutamate 190.

This sequence belongs to the PanB family. As to quaternary structure, homodecamer; pentamer of dimers. Mg(2+) is required as a cofactor.

It localises to the cytoplasm. It catalyses the reaction 3-methyl-2-oxobutanoate + (6R)-5,10-methylene-5,6,7,8-tetrahydrofolate + H2O = 2-dehydropantoate + (6S)-5,6,7,8-tetrahydrofolate. It functions in the pathway cofactor biosynthesis; (R)-pantothenate biosynthesis; (R)-pantoate from 3-methyl-2-oxobutanoate: step 1/2. In terms of biological role, catalyzes the reversible reaction in which hydroxymethyl group from 5,10-methylenetetrahydrofolate is transferred onto alpha-ketoisovalerate to form ketopantoate. The polypeptide is 3-methyl-2-oxobutanoate hydroxymethyltransferase (Christiangramia forsetii (strain DSM 17595 / CGMCC 1.15422 / KT0803) (Gramella forsetii)).